A 409-amino-acid polypeptide reads, in one-letter code: Glycoprotein 55 (409 aa).

An N-terminal signal peptide occupies residues 1–32; it reads MKGPAFSKPLKDKINPWGPLIVLGILIRAGVS. At 33 to 384 the chain is on the virion surface side; that stretch reads VQHDSPHQVF…SFNRSPWFTT (352 aa). 2 N-linked (GlcNAc...) asparagine; by host glycosylation sites follow: Asn43 and Asn58. A disordered region spans residues 254 to 280; sequence PRPPQPPPTGAASMVPGTAPPSQQPGT. Residues Asn296 and Asn328 are each glycosylated (N-linked (GlcNAc...) asparagine; by host). A helical transmembrane segment spans residues 385-405; the sequence is LISTIMGLLIILLLLLILLLW. Over 406 to 409 the chain is Intravirion; that stretch reads TLHS.

As to quaternary structure, homooligomer. Forms heterooligomers with mouse EPOR, probably via their respective transmembrane domains. Forms covalent heterodimers with mouse MST1R isoform sf-Stk, probably via disulfide bonds.

The protein localises to the host endoplasmic reticulum membrane. The protein resides in the host cell membrane. Its subcellular location is the virion membrane. Its function is as follows. This envelope-like membrane glycoprotein is responsible for ligand-independent activation of the erythropoietin receptor EPOR leading to the abnormally rapid proliferation of erythroid precursor cells. In the first stage of Friend disease, constitutive activation of EPOR by gp55 causes uncontrolled, polyclonal proliferation of infected erythroblasts, leading to polycythemia (massive increase in the number of mature red cells). Host susceptibility to SSFV-induced erythroblastosis depends on the expression of the truncated isoform of MST1R receptor tyrosine kinase (MST1R isoform sf-Stk). Interaction with SSFV gp 55 results in constitutive tyrosine phosphorylation and activation of MST1R isoform sf-Stk. The polypeptide is Glycoprotein 55 (env) (Mus musculus (Mouse)).